Reading from the N-terminus, the 58-residue chain is Protein YecU (58 aa).

The chain is Protein YecU from Escherichia coli (strain K12).